Consider the following 230-residue polypeptide: Phosphatidate cytidylyltransferase (230 aa).

A run of 6 helical transmembrane segments spans residues 33 to 53 (FVIAILWCKPLFYILMILVGT), 67 to 87 (IPDLLIGLIIIPIPISLLIFL), 95 to 115 (WLIMLYFCIMWSVDTFAMIGG), 133 to 153 (WSGLVTGVLSAGLVAVLVSFI), 167 to 187 (IYLFIISCILALIAQLSDLFI), and 206 to 226 (HGGVLDRFDSIILTTLILFLM).

The protein belongs to the CDS family.

The protein resides in the cell membrane. The catalysed reaction is a 1,2-diacyl-sn-glycero-3-phosphate + CTP + H(+) = a CDP-1,2-diacyl-sn-glycerol + diphosphate. It functions in the pathway phospholipid metabolism; CDP-diacylglycerol biosynthesis; CDP-diacylglycerol from sn-glycerol 3-phosphate: step 3/3. The chain is Phosphatidate cytidylyltransferase (cdsA) from Rickettsia conorii (strain ATCC VR-613 / Malish 7).